The sequence spans 649 residues: Stress-70 protein, mitochondrial (649 aa).

The transit peptide at 1 to 46 directs the protein to the mitochondrion; that stretch reads MISASRAAAARLVGAAASRGPTAARHKDGWNGLSHEAFRIVSRRDY. Residues 1 to 432 form an interaction with NFS1 region; that stretch reads MISASRAAAA…IQGGVLAGDV (432 aa). ADP is bound by residues Thr63 and Asn64. The nucleotide-binding domain (NBD) stretch occupies residues 63-431; that stretch reads TNSCVAVMEG…AIQGGVLAGD (369 aa). Lys76 carries the N6-acetyllysine modification. Thr87 bears the Phosphothreonine mark. Residues Lys135 and Lys138 each carry the N6-acetyllysine; alternate modification. Residues Lys135 and Lys138 each carry the N6-succinyllysine; alternate modification. Lys143 is subject to N6-acetyllysine. The residue at position 206 (Lys206) is an N6-acetyllysine; alternate. Lys206 is modified (N6-succinyllysine; alternate). Lys206 bears the N6-malonyllysine; alternate mark. N6-acetyllysine is present on residues Lys234 and Lys288. N6-acetyllysine; alternate is present on Lys300. Lys300 bears the N6-succinyllysine; alternate mark. The ADP site is built by Glu313, Lys316, and Ser320. An N6-succinyllysine modification is found at Lys368. ADP contacts are provided by Gly388 and Arg391. Residue Lys394 is modified to N6-succinyllysine. At Ser408 the chain carries Phosphoserine. Positions 432–441 are interdomain linker; sequence VTDVLLLDVT. 3 positions are modified to N6-acetyllysine; alternate: Lys565, Lys598, and Lys638. N6-succinyllysine; alternate occurs at positions 565, 598, and 638.

It belongs to the heat shock protein 70 family. In terms of assembly, interacts strongly with the intermediate form of FXN and weakly with its mature form. Interacts with HSCB. Associates with the mitochondrial contact site and cristae organizing system (MICOS) complex, composed of at least MICOS10/MIC10, CHCHD3/MIC19, CHCHD6/MIC25, APOOL/MIC27, IMMT/MIC60, APOO/MIC23/MIC26 and QIL1/MIC13. This complex was also known under the names MINOS or MitOS complex. The MICOS complex associates with mitochondrial outer membrane proteins SAMM50, MTX1, MTX2 and DNAJC11, mitochondrial inner membrane protein TMEM11 and with HSPA9. Interacts with DNLZ, the interaction is required to prevent self-aggregation. Interacts with TESPA1. Interacts with PDPN. Interacts with NFU1, NFS1 and ISCU. Interacts with TP53; the interaction promotes TP53 degradation. Interacts (via SBD domain) with UBXN2A; the interaction with UBXN2A inhibits HSPA9/MOT-2 interaction with and degradation of TP53, thereby promotes TP53 translocation to the nucleus. Interacts with ITPR1 AND VDAC1; this interaction couples ITPR1 to VDAC1. Component of the TIM23 mitochondrial inner membrane pre-sequence translocase complex.

It localises to the mitochondrion. The protein resides in the nucleus. The protein localises to the nucleolus. Its subcellular location is the cytoplasm. It is found in the mitochondrion matrix. The enzyme catalyses ATP + H2O = ADP + phosphate + H(+). With respect to regulation, the chaperone activity is regulated by ATP-induced allosteric coupling of the nucleotide-binding (NBD) and substrate-binding (SBD) domains. ATP binding in the NBD leads to a conformational change in the NBD, which is transferred through the interdomain linker (IDL) to the substrate-binding domain (SBD). This elicits a reduced substrate affinity and a faster substrate exchange rate. Upon hydrolysis of ATP to ADP, the protein undergoes a conformational change that increases its affinity for substrate proteins. It cycles through repeated phases of ATP hydrolysis and nucleotide exchange, facilitating repeated cycles of substrate binding and release. Functions in collaboration with co-chaperones. Functions with the co-chaperone, DNLZ, to maintain solubility and regulate ATP hydrolysis. Nucleotide exchange factors, GRPEL1 and GRPEL2, accelerate nucleotide exchange. Mitochondrial chaperone that plays a key role in mitochondrial protein import, folding, and assembly. Plays an essential role in the protein quality control system, the correct folding of proteins, the re-folding of misfolded proteins, and the targeting of proteins for subsequent degradation. These processes are achieved through cycles of ATP binding, ATP hydrolysis, and ADP release, mediated by co-chaperones. In mitochondria, it associates with the TIM (translocase of the inner membrane) protein complex to assist in the import and folding of mitochondrial proteins. Plays an important role in mitochondrial iron-sulfur cluster (ISC) biogenesis, interacts with and stabilizes ISC cluster assembly proteins FXN, NFU1, NFS1 and ISCU. Regulates erythropoiesis via stabilization of ISC assembly. Regulates mitochondrial calcium-dependent apoptosis by coupling two calcium channels, ITPR1 and VDAC1, at the mitochondria-associated endoplasmic reticulum (ER) membrane to facilitate calcium transport from the ER lumen to the mitochondria intermembrane space, providing calcium for the downstream calcium channel MCU, which releases it into the mitochondrial matrix. Although primarily located in the mitochondria, it is also found in other cellular compartments. In the cytosol, it associates with proteins involved in signaling, apoptosis, or senescence. It may play a role in cell cycle regulation via its interaction with and promotion of degradation of TP53. May play a role in the control of cell proliferation and cellular aging. Protects against reactive oxygen species (ROS). Extracellular HSPA9 plays a cytoprotective role by preventing cell lysis following immune attack by the membrane attack complex by disrupting formation of the complex. The polypeptide is Stress-70 protein, mitochondrial (Canis lupus familiaris (Dog)).